A 61-amino-acid polypeptide reads, in one-letter code: Large ribosomal subunit protein uL29 (61 aa).

The protein belongs to the universal ribosomal protein uL29 family.

The protein is Large ribosomal subunit protein uL29 of Stenotrophomonas maltophilia (strain R551-3).